The chain runs to 180 residues: Oligoribonuclease (180 aa).

The Exonuclease domain maps to Leu-7–Leu-168. Tyr-128 is a catalytic residue.

It belongs to the oligoribonuclease family.

The protein localises to the cytoplasm. Functionally, 3'-to-5' exoribonuclease specific for small oligoribonucleotides. The sequence is that of Oligoribonuclease from Dichelobacter nodosus (strain VCS1703A).